The following is a 213-amino-acid chain: Proteasome subunit beta 1 (213 aa).

Residues 1–18 constitute a propeptide, removed in mature form; by autocatalysis; that stretch reads MVFIAVFNGVFAMSSLPG. T19 serves as the catalytic Nucleophile.

The protein belongs to the peptidase T1B family. The 20S proteasome core is composed of 14 alpha and 14 beta subunits that assemble into four stacked heptameric rings, resulting in a barrel-shaped structure. The two inner rings, each composed of seven catalytic beta subunits, are sandwiched by two outer rings, each composed of seven alpha subunits. The catalytic chamber with the active sites is on the inside of the barrel. Has a gated structure, the ends of the cylinder being occluded by the N-termini of the alpha-subunits. Is capped at one or both ends by the proteasome regulatory ATPase, PAN.

It is found in the cytoplasm. It carries out the reaction Cleavage of peptide bonds with very broad specificity.. The formation of the proteasomal ATPase PAN-20S proteasome complex, via the docking of the C-termini of PAN into the intersubunit pockets in the alpha-rings, triggers opening of the gate for substrate entry. Interconversion between the open-gate and close-gate conformations leads to a dynamic regulation of the 20S proteasome proteolysis activity. Its function is as follows. Component of the proteasome core, a large protease complex with broad specificity involved in protein degradation. This Staphylothermus marinus (strain ATCC 43588 / DSM 3639 / JCM 9404 / F1) protein is Proteasome subunit beta 1.